A 189-amino-acid polypeptide reads, in one-letter code: Development-specific protein LVN1.2 (189 aa).

Endoderm cells.

The protein is Development-specific protein LVN1.2 of Lytechinus variegatus (Green sea urchin).